The primary structure comprises 457 residues: F-box/LRR-repeat protein At2g42730 (457 aa).

Residues 4–50 enclose the F-box domain; sequence KDVISRLPDEVLGRILSLISTKEAVSTSVLSKRWKNMFVLVSNLDID. LRR repeat units lie at residues 265-288, 292-315, and 318-343; these read MDET…MRNL, IRNV…CKEM, and FDSL…LIKN.

In Arabidopsis thaliana (Mouse-ear cress), this protein is F-box/LRR-repeat protein At2g42730.